Here is a 202-residue protein sequence, read N- to C-terminus: Small ribosomal subunit protein uS4c (202 aa).

The segment at 20–43 (GLTRKTTRRNSRPGQHGDQPRKPS) is disordered. Positions 90 to 152 (MRLDNIVFRL…ARSKQLVENY (63 aa)) constitute an S4 RNA-binding domain.

This sequence belongs to the universal ribosomal protein uS4 family. As to quaternary structure, part of the 30S ribosomal subunit. Contacts protein S5. The interaction surface between S4 and S5 is involved in control of translational fidelity.

The protein localises to the plastid. It localises to the chloroplast. Functionally, one of the primary rRNA binding proteins, it binds directly to 16S rRNA where it nucleates assembly of the body of the 30S subunit. In terms of biological role, with S5 and S12 plays an important role in translational accuracy. The chain is Small ribosomal subunit protein uS4c (rps4) from Rhodomonas salina (Cryptomonas salina).